Consider the following 372-residue polypeptide: 3 beta-hydroxysteroid dehydrogenase/Delta 5--&gt;4-isomerase type 2 (372 aa).

Residue Tyr154 is the Proton acceptor of the active site. Position 158 (Lys158) interacts with NAD(+). The helical transmembrane segment at 287-307 threads the bilayer; sequence LTLMYWIGFLLEVVSFLLSPI.

It belongs to the 3-beta-HSD family. In terms of tissue distribution, expressed in adrenal gland, testis and ovary.

The protein localises to the endoplasmic reticulum membrane. Its subcellular location is the mitochondrion membrane. It carries out the reaction a 3beta-hydroxy-Delta(5)-steroid + NAD(+) = a 3-oxo-Delta(5)-steroid + NADH + H(+). The catalysed reaction is a 3-oxo-Delta(5)-steroid = a 3-oxo-Delta(4)-steroid. The enzyme catalyses pregnenolone + NAD(+) = pregn-5-ene-3,20-dione + NADH + H(+). It catalyses the reaction pregn-5-ene-3,20-dione = progesterone. It carries out the reaction 3beta-hydroxyandrost-5-en-17-one + NAD(+) = androst-5-ene-3,17-dione + NADH + H(+). The catalysed reaction is androst-5-ene-3,17-dione = androst-4-ene-3,17-dione. It participates in lipid metabolism; steroid biosynthesis. In terms of biological role, 3-beta-HSD is a bifunctional enzyme, that catalyzes the oxidative conversion of Delta(5)-ene-3-beta-hydroxy steroid, and the oxidative conversion of ketosteroids. The 3-beta-HSD enzymatic system plays a crucial role in the biosynthesis of all classes of hormonal steroids. This is 3 beta-hydroxysteroid dehydrogenase/Delta 5--&gt;4-isomerase type 2 from Homo sapiens (Human).